The following is a 395-amino-acid chain: Synaptotagmin-8 (395 aa).

At 1–44 (MQADRSMKMGHVSNPLSTSAPVDATAGPNLIPDLITKIPWPRWI) the chain is on the extracellular side. Residues 45 to 65 (LFIAILAAGVLLVSCLLCVIC) traverse the membrane as a helical; Signal-anchor for type III membrane protein segment. At 66 to 395 (YCCHRQRHRK…PRLPLLRPRS (330 aa)) the chain is on the cytoplasmic side. C2 domains lie at 113–229 (PWGQ…ESWY) and 241–370 (QMGE…AQWH).

Belongs to the synaptotagmin family. Homodimer or homooligomer. Homodimerization and homooligomerization do not depend on Ca(2+). Interacts with SYNCRIP isoform 2 C-terminus. Binds inositol 1,3,4,5-tetrakisphosphate (IP4). Binds to AP2 in a Ca(2+)-independent manner. Interacts with STX1A, STX1B and STX2; the interaction is Ca(2+)-dependent. In terms of tissue distribution, ubiquitous. Strongly expressed in heart, kidney, cerebral cortex, pancreas, and many insulin-secreting cells; lower expression in spleen. Broadly distributed in kidney.

It localises to the cell membrane. It is found in the cytoplasmic vesicle. The protein localises to the secretory vesicle. Its subcellular location is the acrosome. Functionally, involved in the trafficking and exocytosis of secretory vesicles in non-neuronal tissues. Mediates Ca(2+)-regulation of exocytosis acrosomal reaction in sperm. May mediate Ca(2+)-regulation of exocytosis in insulin secreted cells. The chain is Synaptotagmin-8 (Syt8) from Rattus norvegicus (Rat).